The following is a 163-amino-acid chain: Putative pre-16S rRNA nuclease (163 aa).

The protein belongs to the YqgF nuclease family.

Its subcellular location is the cytoplasm. In terms of biological role, could be a nuclease involved in processing of the 5'-end of pre-16S rRNA. This Chlamydia caviae (strain ATCC VR-813 / DSM 19441 / 03DC25 / GPIC) (Chlamydophila caviae) protein is Putative pre-16S rRNA nuclease.